Consider the following 110-residue polypeptide: Small ribosomal subunit protein bS16 (110 aa).

Residues 87-110 (ARQNPIKAVPRKERKAQAEAAAKG) form a disordered region.

Belongs to the bacterial ribosomal protein bS16 family.

This chain is Small ribosomal subunit protein bS16, found in Bradyrhizobium sp. (strain BTAi1 / ATCC BAA-1182).